A 316-amino-acid chain; its full sequence is Transaldolase (316 aa).

Residue K131 is the Schiff-base intermediate with substrate of the active site.

The protein belongs to the transaldolase family. Type 1 subfamily. As to quaternary structure, homodimer.

The protein localises to the cytoplasm. The catalysed reaction is D-sedoheptulose 7-phosphate + D-glyceraldehyde 3-phosphate = D-erythrose 4-phosphate + beta-D-fructose 6-phosphate. It participates in carbohydrate degradation; pentose phosphate pathway; D-glyceraldehyde 3-phosphate and beta-D-fructose 6-phosphate from D-ribose 5-phosphate and D-xylulose 5-phosphate (non-oxidative stage): step 2/3. Its function is as follows. Transaldolase is important for the balance of metabolites in the pentose-phosphate pathway. The protein is Transaldolase of Buchnera aphidicola subsp. Acyrthosiphon pisum (strain 5A).